A 425-amino-acid chain; its full sequence is MIDIKILRENPEIMKENIILRNLDPQKYDVDYIIELDAKRRSLQKELDNLRAQRNKISQEIGKHQGEEREKLIKEAKILKEKIEELAKEYDNVEKELFSRLWQLPNFLSPKAPRGKDEKDNVEIKKWGEIKTFNFTPKDHLDLALLNDLVDFERGSKVTGSNFYYLKNEAVLLEFALFRLVIDTLLPEGFKLFITPDLARMEIIDGIGFQPRGPEAQIYRVEDTDLGLIATAEITLGGYHKDEILDELDLPLKYLGFSHCFRTEAGAYGRYNRGLYRVHQFSKAEIFIICRPEDSEEMHEYILGLEEKIFQKLEIPYRVLDICSGDLGAPAARKFDIEAWMPGRGEFGEVTSCSNCTDYQARRLNIRFRRVTGEVEYVHMLNGTAIAISRALIAIFENYQQEDGSILIPKALQPYIGISEIRPKK.

Thr-231 to Glu-233 serves as a coordination point for L-serine. ATP is bound by residues Arg-262 to Glu-264 and Val-278. Glu-285 lines the L-serine pocket. Glu-349–Ser-352 contacts ATP. Thr-384 provides a ligand contact to L-serine.

It belongs to the class-II aminoacyl-tRNA synthetase family. Type-1 seryl-tRNA synthetase subfamily. Homodimer. The tRNA molecule binds across the dimer.

It localises to the cytoplasm. The catalysed reaction is tRNA(Ser) + L-serine + ATP = L-seryl-tRNA(Ser) + AMP + diphosphate + H(+). It carries out the reaction tRNA(Sec) + L-serine + ATP = L-seryl-tRNA(Sec) + AMP + diphosphate + H(+). It functions in the pathway aminoacyl-tRNA biosynthesis; selenocysteinyl-tRNA(Sec) biosynthesis; L-seryl-tRNA(Sec) from L-serine and tRNA(Sec): step 1/1. Functionally, catalyzes the attachment of serine to tRNA(Ser). Is also able to aminoacylate tRNA(Sec) with serine, to form the misacylated tRNA L-seryl-tRNA(Sec), which will be further converted into selenocysteinyl-tRNA(Sec). This Dictyoglomus turgidum (strain DSM 6724 / Z-1310) protein is Serine--tRNA ligase.